The chain runs to 212 residues: Large ribosomal subunit protein uL4 (212 aa).

Polar residues predominate over residues 54-65; that stretch reads SQKSRSDVSGSN. The tract at residues 54-85 is disordered; the sequence is SQKSRSDVSGSNKKPWRQKGTGRARSGSVKSP.

Belongs to the universal ribosomal protein uL4 family. Part of the 50S ribosomal subunit.

Functionally, one of the primary rRNA binding proteins, this protein initially binds near the 5'-end of the 23S rRNA. It is important during the early stages of 50S assembly. It makes multiple contacts with different domains of the 23S rRNA in the assembled 50S subunit and ribosome. Its function is as follows. Forms part of the polypeptide exit tunnel. The sequence is that of Large ribosomal subunit protein uL4 from Blochmanniella floridana.